A 64-amino-acid chain; its full sequence is Small ribosomal subunit protein eS17 (64 aa).

The protein belongs to the eukaryotic ribosomal protein eS17 family.

The protein is Small ribosomal subunit protein eS17 of Methanosarcina acetivorans (strain ATCC 35395 / DSM 2834 / JCM 12185 / C2A).